Reading from the N-terminus, the 133-residue chain is Ribonuclease P protein component (133 aa).

Belongs to the RnpA family. In terms of assembly, consists of a catalytic RNA component (M1 or rnpB) and a protein subunit.

It carries out the reaction Endonucleolytic cleavage of RNA, removing 5'-extranucleotides from tRNA precursor.. Its function is as follows. RNaseP catalyzes the removal of the 5'-leader sequence from pre-tRNA to produce the mature 5'-terminus. It can also cleave other RNA substrates such as 4.5S RNA. The protein component plays an auxiliary but essential role in vivo by binding to the 5'-leader sequence and broadening the substrate specificity of the ribozyme. The protein is Ribonuclease P protein component of Bartonella quintana (strain Toulouse) (Rochalimaea quintana).